Here is a 536-residue protein sequence, read N- to C-terminus: G-protein coupled receptor Mth2 (536 aa).

Intrachain disulfides connect Cys-17/Cys-71, Cys-73/Cys-78, Cys-82/Cys-177, Cys-83/Cys-96, and Cys-138/Cys-197. N-linked (GlcNAc...) asparagine glycosylation is found at Asn-24 and Asn-33. N-linked (GlcNAc...) asparagine glycans are attached at residues Asn-103, Asn-113, Asn-118, Asn-159, and Asn-184. A helical membrane pass occupies residues 212-232 (YAMMFSIPFMMLTIAVYLLIP). Topologically, residues 233–241 (ELRNQHGKS) are cytoplasmic. Residues 242–262 (LVCYLIGLTVGYSSLCYVQLY) traverse the membrane as a helical segment. Topologically, residues 263–273 (QVDATGVTCKV) are extracellular. Residues 274–294 (FGYTAYFFFMGAYMWLSVISF) traverse the membrane as a helical segment. Residues 295–314 (DLWHNFRGTRGINRFQEKKR) lie on the Cytoplasmic side of the membrane. A helical transmembrane segment spans residues 315-335 (FLFYSLYSWGIALVFLAFTYC). Over 336–365 (AQQLSNLPDNLKPGIGDGVYCWLDMSNWAA) the chain is Extracellular. A helical transmembrane segment spans residues 366 to 386 (MIYFYGPILAIVVANTIMFIM). Over 387 to 417 (TAIKIHGVQREMARIIASENSTKNLRTEKDK) the chain is Cytoplasmic. A helical transmembrane segment spans residues 418 to 438 (FGLFLRLFLIMGITWLTELIS). Topologically, residues 439-449 (YFVGSDKGWSK) are extracellular. The helical transmembrane segment at 450–470 (LFYISDLANAMQGFLIFMLFV) threads the bilayer. The Cytoplasmic segment spans residues 471 to 536 (MKKKVKHLIT…VDPQKTTIFR (66 aa)). The tract at residues 487–506 (RDGSNQRQSQYSTKTTSSSV) is disordered. Residues 492 to 505 (QRQSQYSTKTTSSS) are compositionally biased toward low complexity.

Belongs to the G-protein coupled receptor 2 family. Mth subfamily. As to quaternary structure, homodimer.

The protein localises to the cell membrane. Involved in biological aging and stress response. Essential for adult survival. The protein is G-protein coupled receptor Mth2 (mth2) of Drosophila simulans (Fruit fly).